The chain runs to 300 residues: Erythroblast NAD(P)(+)--arginine ADP-ribosyltransferase (300 aa).

A signal peptide spans 1 to 22; it reads MEEPLLHAILGLVLLLSTRTDA. 2 disulfides stabilise this stretch: Cys-51/Cys-260 and Cys-159/Cys-208. The TR mART core domain occupies 70 to 256; that stretch reads ETFAEGWRSA…IQLRSQGKSS (187 aa). NAD(+) contacts are provided by Tyr-107, Arg-164, and Gln-183. Residue Arg-164 is part of the active site. Ser-186 is a catalytic residue. NAD(+) is bound at residue Ser-217. Glu-224 is an active-site residue. The disordered stretch occupies residues 276-300; it reads SADKSSPLPRSPWPGWAPLAAPHSH.

Belongs to the Arg-specific ADP-ribosyltransferase family.

It carries out the reaction L-arginyl-[protein] + NAD(+) = N(omega)-(ADP-D-ribosyl)-L-arginyl-[protein] + nicotinamide + H(+). This Gallus gallus (Chicken) protein is Erythroblast NAD(P)(+)--arginine ADP-ribosyltransferase (MADPRT).